The following is a 551-amino-acid chain: Bestrophin-1 (551 aa).

Over 1 to 31 (MTITYTNKVANARLGSFSSLLLCWRGSIYKL) the chain is Cytoplasmic. A10 is a Ca(2+) binding site. A helical membrane pass occupies residues 32-51 (LYGEFLVFIFLYYSIRGLYR). Residues 52–60 (MVLSSDQQL) are Extracellular-facing. The helical transmembrane segment at 61-82 (LFEKLALYCDSYIQLIPISFVL) threads the bilayer. At 83–237 (GFYVTLVVSR…DWISIPLVYT (155 aa)) the chain is on the cytoplasmic side. Residues 238-255 (QVVTVAVYSFFLACLIGR) form a helical membrane-spanning segment. The Extracellular portion of the chain corresponds to 256-274 (QFLNPNKDYPGHEMDLVVP). A helical membrane pass occupies residues 275-288 (VFTILQFLFYMGWL). Residues 289–551 (KVAEQLINPF…EAGTKPVLYE (263 aa)) lie on the Cytoplasmic side of the membrane. The Ca(2+) site is built by Q293, N296, D301, and D304. Positions 346–379 (PYTAASARSRRHSFMGSTFNISLKKEDLELWSKE) are auto-inhibitory segment. The segment at 459-489 (SHCGPQAPSSHPTEQSAPSSSDTGDGPSTDY) is disordered. Polar residues predominate over residues 465–475 (APSSHPTEQSA). Positions 476–488 (PSSSDTGDGPSTD) are enriched in low complexity.

It belongs to the anion channel-forming bestrophin (TC 1.A.46) family. Calcium-sensitive chloride channel subfamily. As to quaternary structure, interacts with YWHAG; this interaction promotes the ligand-gated L-glutamate channel activity leading to the positive regulation of NMDA glutamate receptor activity through the L-glutamate secretion.

It is found in the cell membrane. It localises to the basolateral cell membrane. The enzyme catalyses 4-aminobutanoate(in) = 4-aminobutanoate(out). It catalyses the reaction L-glutamate(out) = L-glutamate(in). The catalysed reaction is chloride(in) = chloride(out). It carries out the reaction hydrogencarbonate(in) = hydrogencarbonate(out). The enzyme catalyses D-serine(in) = D-serine(out). Inactivated by sulfhydryl-reactive agents. In terms of biological role, ligand-gated anion channel that allows the movement of anions across cell membranes when activated by calcium (Ca2+). Allows the movement of chloride and hydrogencarbonate. Found in a partially open conformation leading to significantly smaller chloride movement. Upon F2R/PAR-1 activation, the sequestered calcium is released into the cytosol of astrocytes, leading to the (Ca2+)-dependent release of L-glutamate into the synaptic cleft that targets the neuronal postsynaptic GRIN2A/NMDAR receptor resulting in the synaptic plasticity regulation. Upon activation of the norepinephrine-alpha-1 adrenergic receptor signaling pathway, transports as well D-serine than L-glutamate in a (Ca2+)-dependent manner, leading to activation of adjacent NMDAR receptors and therefore regulates the heterosynaptic long-term depression and metaplasticity during initial memory acquisition. Releases the 4-aminobutanoate neurotransmitter in a (Ca2+)-dependent manner, and participates in its tonic release from cerebellar glial cells. The chain is Bestrophin-1 from Mus musculus (Mouse).